Here is a 353-residue protein sequence, read N- to C-terminus: F-box protein At3g58530 (353 aa).

The region spanning 8–56 is the F-box; degenerate domain; it reads EEEEETWRREIVTSVMRLVSTRLPQTDLISLLLVSPWLYRTLISYPSIW.

The sequence is that of F-box protein At3g58530 from Arabidopsis thaliana (Mouse-ear cress).